The chain runs to 382 residues: D-galactonate dehydratase (382 aa).

A Mg(2+)-binding site is contributed by D183. The active-site Proton donor is the H185. Positions 209 and 235 each coordinate Mg(2+). The Proton acceptor role is filled by H285.

It belongs to the mandelate racemase/muconate lactonizing enzyme family. GalD subfamily. It depends on Mg(2+) as a cofactor.

It catalyses the reaction D-galactonate = 2-dehydro-3-deoxy-D-galactonate + H2O. The protein operates within carbohydrate acid metabolism; D-galactonate degradation; D-glyceraldehyde 3-phosphate and pyruvate from D-galactonate: step 1/3. Its function is as follows. Catalyzes the dehydration of D-galactonate to 2-keto-3-deoxy-D-galactonate. This chain is D-galactonate dehydratase, found in Escherichia coli (strain 55989 / EAEC).